A 125-amino-acid polypeptide reads, in one-letter code: Small ribosomal subunit protein uS13 (125 aa).

It belongs to the universal ribosomal protein uS13 family. As to quaternary structure, part of the 30S ribosomal subunit. Forms a loose heterodimer with protein S19. Forms two bridges to the 50S subunit in the 70S ribosome.

Its function is as follows. Located at the top of the head of the 30S subunit, it contacts several helices of the 16S rRNA. In the 70S ribosome it contacts the 23S rRNA (bridge B1a) and protein L5 of the 50S subunit (bridge B1b), connecting the 2 subunits; these bridges are implicated in subunit movement. Contacts the tRNAs in the A and P-sites. This chain is Small ribosomal subunit protein uS13, found in Rickettsia massiliae (strain Mtu5).